Reading from the N-terminus, the 206-residue chain is Two-component response regulator ARR7 (206 aa).

Positions 25-152 (HVLAVDDSIV…DVKRIKQLIM (128 aa)) constitute a Response regulatory domain. The residue at position 85 (Asp-85) is a 4-aspartylphosphate. A disordered region spans residues 165–206 (SNKRKLQEDSDTSSSSHDDTSIKDSSCSKRMKSESENLFSLL).

This sequence belongs to the ARR family. Type-A subfamily. Two-component system major event consists of a His-to-Asp phosphorelay between a sensor histidine kinase (HK) and a response regulator (RR). In plants, the His-to-Asp phosphorelay involves an additional intermediate named Histidine-containing phosphotransfer protein (HPt). This multistep phosphorelay consists of a His-Asp-His-Asp sequential transfer of a phosphate group between first a His and an Asp of the HK protein, followed by the transfer to a conserved His of the HPt protein and finally the transfer to an Asp in the receiver domain of the RR protein. Predominantly expressed in roots and young flowers.

It localises to the nucleus. Functions as a response regulator involved in His-to-Asp phosphorelay signal transduction system. Phosphorylation of the Asp residue in the receiver domain activates the ability of the protein to promote the transcription of target genes. Type-A response regulators seem to act as negative regulators of the cytokinin signaling. This chain is Two-component response regulator ARR7 (ARR7), found in Arabidopsis thaliana (Mouse-ear cress).